Consider the following 267-residue polypeptide: Heme-containing CO-sensing transcriptional regulator RcoM 2 (267 aa).

A PAS domain is found at 15–86; it reads RAETFQHKLE…KSRDKLRFLL (72 aa). 2 residues coordinate heme: H74 and M104. The HTH LytTR-type domain maps to 161–266; sequence IPVYRKSRVI…TAQLKELLGV (106 aa).

The cofactor is heme.

The protein resides in the cytoplasm. One-component, b-type heme-containing aerobic sensor and transcriptional regulator that responds to CO by activating the expression of the oxidation operon cox. In Paraburkholderia xenovorans (strain LB400), this protein is Heme-containing CO-sensing transcriptional regulator RcoM 2 (rcoM2).